The primary structure comprises 1840 residues: Collagen alpha-1(V) chain (1840 aa).

A signal peptide spans 1–36 (MDVHTRWKDRLPVGPAAVPPLLLLLLLLWAPPQSRA). One can recognise a Laminin G-like domain in the interval 72 to 244 (DVAYRVSKDA…DYCEHYSPDC (173 aa)). Residues 231–445 (RAAYDYCEHY…MPANQDTIYE (215 aa)) form a nonhelical region region. A sulfotyrosine mark is found at Tyr-234, Tyr-236, Tyr-240, Tyr-262, Tyr-263, and Tyr-271. Disordered regions lie at residues 242-523 (PDCD…TMLM), 528-547 (FGGG…QESQ), and 561-1576 (GPAG…EVIQ). The span at 258 to 268 (NPDEYYPEGDG) shows a compositional bias: acidic residues. Low complexity-rich tracts occupy residues 335–352 (DYDY…PYED) and 376–386 (TSTIITSNTSN). Positions 446 to 560 (GIGGPRGEKG…ILQQARLALR (115 aa)) are interrupted collagenous region. Over residues 472–487 (PPGPEGPAGLPGPPGT) the composition is skewed to pro residues. A compositionally biased stretch (low complexity) spans 508-523 (LPGADGLPGPPGTMLM). Positions 561–572 (GPAGPMGLTGRP) are enriched in low complexity. The tract at residues 561 to 1572 (GPAGPMGLTG…GLPGPPGPPG (1012 aa)) is triple-helical region. 3 positions are modified to 4-hydroxyproline: Pro-572, Pro-578, and Pro-623. Lys-629 is subject to 5-hydroxylysine. 4-hydroxyproline is present on Pro-641. Position 644 is a 5-hydroxylysine (Lys-644). 4-hydroxyproline is present on residues Pro-650, Pro-656, Pro-659, Pro-677, and Pro-680. Residues 673–688 (PRGLPGEPGPRGLLGP) are compositionally biased toward low complexity. 2 positions are modified to 3-hydroxyproline: Pro-682 and Pro-688. Pro residues predominate over residues 689–698 (KGPPGPPGPP). A 4-hydroxyproline mark is found at Pro-692, Pro-698, and Pro-707. The residue at position 710 (Lys-710) is a 5-hydroxylysine. Residues Pro-719, Pro-722, Pro-728, and Pro-734 each carry the 4-hydroxyproline modification. Residues 724 to 743 (QQGNPGAQGLPGPQGAIGPP) are compositionally biased toward low complexity. The residue at position 746 (Lys-746) is a 5-hydroxylysine. A compositionally biased stretch (low complexity) spans 749-758 (LGKPGLPGMP). A 4-hydroxyproline mark is found at Pro-752, Pro-758, Pro-764, Pro-767, and Pro-773. Lys-776 bears the 5-hydroxylysine mark. A 4-hydroxyproline mark is found at Pro-782 and Pro-791. 4 positions are modified to 5-hydroxylysine: Lys-797, Lys-806, Lys-809, and Lys-812. A 4-hydroxyproline modification is found at Pro-818. 5-hydroxylysine is present on Lys-821. Pro-836 carries the 4-hydroxyproline modification. The span at 839–848 (RGEDGPEGPK) shows a compositional bias: basic and acidic residues. 5-hydroxylysine occurs at positions 848 and 866. 4-hydroxyproline is present on residues Pro-872, Pro-875, and Pro-878. Lys-884 is modified (5-hydroxylysine). 4-hydroxyproline occurs at positions 890 and 893. Lys-899 is modified (5-hydroxylysine). A 4-hydroxyproline mark is found at Pro-905 and Pro-908. Residues 910–919 (PRGQRGPTGP) are compositionally biased toward low complexity. Residues Pro-932 and Pro-947 each carry the 4-hydroxyproline modification. Low complexity-rich tracts occupy residues 973–992 (KDGL…QGKT) and 1001–1013 (VGPQ…TGPM). 4-hydroxyproline is present on residues Pro-1019, Pro-1022, Pro-1025, and Pro-1031. Residues 1090–1106 (SPGERGPAGAAGPIGIP) show a composition bias toward low complexity. The segment covering 1108 to 1117 (RPGPQGPPGP) has biased composition (pro residues). 2 positions are modified to 4-hydroxyproline: Pro-1223 and Pro-1226. Positions 1261–1270 (PSGAPGADGP) are enriched in low complexity. Residues 1296–1305 (GLPGEGGPLG) show a composition bias toward gly residues. 2 stretches are compositionally biased toward pro residues: residues 1382 to 1400 (TGEP…PGPA) and 1456 to 1471 (SPGP…PPGL). 4-hydroxyproline is present on residues Pro-1469 and Pro-1472. Residues 1487–1496 (PGLIGLIGPP) show a composition bias toward low complexity. The segment covering 1528–1543 (PLGPPGPPGLPGPPGP) has biased composition (pro residues). Residues 1544–1556 (KGAKGSSGPTGPK) show a composition bias toward low complexity. The interval 1573-1607 (EVIQPLPIQASRTRRNIDASQLLDDGAGESYLDYA) is nonhelical region. Sulfotyrosine occurs at positions 1603 and 1606. Residues 1611–1839 (EEIFGSLNSL…GFEVGPACFL (229 aa)) form the Fibrillar collagen NC1 domain.

The protein belongs to the fibrillar collagen family. As to quaternary structure, trimers of two alpha 1(V) and one alpha 2(V) chains in most tissues and trimers of one alpha 1(V), one alpha 2(V), and one alpha 3(V) chains in placenta. Interacts with CSPG4. Post-translationally, hydroxylation on proline residues within the sequence motif, GXPG, is most likely to be 4-hydroxy as this fits the requirement for 4-hydroxylation in vertebrates. Sulfated on 40% of tyrosines. Ubiquitously expressed.

The protein localises to the secreted. The protein resides in the extracellular space. Its subcellular location is the extracellular matrix. Functionally, type V collagen is a member of group I collagen (fibrillar forming collagen). It is a minor connective tissue component of nearly ubiquitous distribution. Type V collagen binds to DNA, heparan sulfate, thrombospondin, heparin, and insulin. In Cricetulus longicaudatus (Long-tailed dwarf hamster), this protein is Collagen alpha-1(V) chain (COL5A1).